The primary structure comprises 1174 residues: Creatine kinase, flagellar (1174 aa).

The segment covering 1 to 14 (MGCAASSQQTTATG) has biased composition (polar residues). The segment at 1-62 (MGCAASSQQT…PFVEPDPNYP (62 aa)) is disordered. The span at 18–39 (AAGEKANPAPANNNPNAANKAE) shows a compositional bias: low complexity. Positions 53-139 (PFVEPDPNYP…FDPTIDKRHN (87 aa)) constitute a Phosphagen kinase N-terminal 1 domain. The 1; approximate repeat unit spans residues 61 to 414 (YPDLSKHNNY…EKALEKGSDI (354 aa)). The Phosphagen kinase C-terminal 1 domain occupies 166–408 (YVLSCRVRTG…KKLIELEKAL (243 aa)). ATP-binding positions include 169–173 (SCRVR), histidine 232, arginine 277, and 333–337 (RAGVH). In terms of domain architecture, Phosphagen kinase N-terminal 2 spans 426-512 (RAEQVKEGYP…FDPVIDARHG (87 aa)). The stretch at 434-787 (YPDLSKHNNH…EKKLEKGEDI (354 aa)) is one 2; approximate repeat. The Phosphagen kinase C-terminal 2 domain occupies 539–781 (YVLSCRVRTG…ELLVQMEKKL (243 aa)). ATP is bound by residues 542–546 (SCRVR), histidine 605, arginine 706, 734–739 (RGTGGV), and aspartate 749. One can recognise a Phosphagen kinase N-terminal 3 domain in the interval 800-886 (PIKPFSYDYP…FDPVISARHG (87 aa)). The 3; approximate repeat unit spans residues 808–1161 (YPDFSLHNNW…EKALMKGEDI (354 aa)). Residues 913–1155 (FVLSCRVRTG…KLLVNLEKAL (243 aa)) form the Phosphagen kinase C-terminal 3 domain.

It belongs to the ATP:guanido phosphotransferase family. In terms of assembly, monomer.

The protein resides in the cytoplasm. The protein localises to the cytoskeleton. It is found in the flagellum axoneme. The enzyme catalyses creatine + ATP = N-phosphocreatine + ADP + H(+). This axonemal protein participates in an energy shuttle that utilizes phosphocreatine to transfer the energy from ATP generated by the mitochondrion in the sperm head to dynein in the distal portions of the flagellum. This chain is Creatine kinase, flagellar, found in Strongylocentrotus purpuratus (Purple sea urchin).